A 274-amino-acid polypeptide reads, in one-letter code: MPELPEVETVCRGLEKLIIGKKISSIEIRYPKMIKTDLEEFQRELPSQIIESMGRRGKYLLFYLTDKVLISHLRMEGKYFYYPDQGPERKHAHVFFHFEDGGTLVYEDVRKFGTMELLVPDLLDAYFISKKLGPEPSEQDFDLQVFQAALAKSKKPIKSHLLDQTLVAGLGNIYVDEVLWRAQVHPARPSQTLTAEEATAIHDQTIAVLGQAVEKGGSTIRTYTNAFGEDGSMQDFHQVYDKTGQECVRCGTIIEKIQLGGRGTHFCPNCQRRD.

The active-site Schiff-base intermediate with DNA is the Pro2. Glu3 (proton donor) is an active-site residue. Lys58 (proton donor; for beta-elimination activity) is an active-site residue. 2 residues coordinate DNA: His91 and Arg110. Residues 238-272 (QVYDKTGQECVRCGTIIEKIQLGGRGTHFCPNCQR) form an FPG-type zinc finger. Arg262 functions as the Proton donor; for delta-elimination activity in the catalytic mechanism.

It belongs to the FPG family. As to quaternary structure, monomer. The cofactor is Zn(2+).

It catalyses the reaction Hydrolysis of DNA containing ring-opened 7-methylguanine residues, releasing 2,6-diamino-4-hydroxy-5-(N-methyl)formamidopyrimidine.. The enzyme catalyses 2'-deoxyribonucleotide-(2'-deoxyribose 5'-phosphate)-2'-deoxyribonucleotide-DNA = a 3'-end 2'-deoxyribonucleotide-(2,3-dehydro-2,3-deoxyribose 5'-phosphate)-DNA + a 5'-end 5'-phospho-2'-deoxyribonucleoside-DNA + H(+). Its function is as follows. Involved in base excision repair of DNA damaged by oxidation or by mutagenic agents. Acts as a DNA glycosylase that recognizes and removes damaged bases. Has a preference for oxidized purines, such as 7,8-dihydro-8-oxoguanine (8-oxoG). Has AP (apurinic/apyrimidinic) lyase activity and introduces nicks in the DNA strand. Cleaves the DNA backbone by beta-delta elimination to generate a single-strand break at the site of the removed base with both 3'- and 5'-phosphates. The chain is Formamidopyrimidine-DNA glycosylase from Streptococcus pneumoniae (strain ATCC BAA-255 / R6).